A 71-amino-acid polypeptide reads, in one-letter code: MPQVKLKEGEPVDVAIRRFKRSCEKAGVLADVRKREFYEKPTQERKRKKAAAVKRYQKKLARESVRTTRLY.

Belongs to the bacterial ribosomal protein bS21 family.

This chain is Small ribosomal subunit protein bS21, found in Acinetobacter baylyi (strain ATCC 33305 / BD413 / ADP1).